A 393-amino-acid polypeptide reads, in one-letter code: Beta-ureidopropionase (393 aa).

The 273-residue stretch at 72-344 (VRVGLVQNRI…DGLLVTELNL (273 aa)) folds into the CN hydrolase domain. Glutamate 119 (proton acceptor) is an active-site residue. The Proton donor role is filled by lysine 196. Residue cysteine 233 is the Nucleophile of the active site. Residue serine 378 is modified to Phosphoserine.

Belongs to the carbon-nitrogen hydrolase superfamily. BUP family. In terms of assembly, homodimer, homotetramer, homooctamer; can also form higher homooligomers.

It is found in the cytoplasm. The catalysed reaction is 3-(carbamoylamino)propanoate + H2O + 2 H(+) = beta-alanine + NH4(+) + CO2. It catalyses the reaction 3-(carbamoylamino)-2-methylpropanoate + H2O + 2 H(+) = (R)-3-amino-2-methylpropanoate + NH4(+) + CO2. It functions in the pathway amino-acid biosynthesis; beta-alanine biosynthesis. Catalyzes a late step in pyrimidine degradation. Converts N-carbamoyl-beta-alanine (3-ureidopropanoate) into beta-alanine, ammonia and carbon dioxide. Likewise, converts N-carbamoyl-beta-aminoisobutyrate (3-ureidoisobutyrate) into beta-aminoisobutyrate, ammonia and carbon dioxide. This chain is Beta-ureidopropionase (Upb1), found in Mus musculus (Mouse).